Consider the following 313-residue polypeptide: Probable inactive peptidyl-prolyl cis-trans isomerase-like 6 (313 aa).

The 164-residue stretch at 147-310 (YLDICIDLSP…LLCSIADSGV (164 aa)) folds into the PPIase cyclophilin-type domain.

Belongs to the cyclophilin-type PPIase family.

Functionally, probable inactive PPIase with no peptidyl-prolyl cis-trans isomerase activity. This Mus musculus (Mouse) protein is Probable inactive peptidyl-prolyl cis-trans isomerase-like 6.